We begin with the raw amino-acid sequence, 452 residues long: MNDTIAAIATPPGEGGIGIIRLSGPDAQSIALRIFRPVRPGRLRSHRVRYGHVIGPDGEVIDEALLTLMAAPHSFTREDVVEISCHGGALPVQLTLEAALAAGARLANPGEFTLRAFLNGRIDLSQAEATLDVIRAQTSAGLAIAQAQLGGWLAREVRAARTAILEPLAYITALIDFPEEGIEPQTVAGPIEQALATVERLLAGADQGMVLRNGARVVLVGRPNVGKSSLLNALLRVERAIVTPIPGTTRDTLEEMANLAGVPVVLIDTAGMRTSTDPVEQIGVERAAAALAGADLALLVFDSSQPFTPEDEAMLVATADRPTIIVWNKCDDPDVPPPPAPPHPKAMAVVACSARYGHGIDTLAKTIATTLLGGTLPAVGATHLVSNPRHRAALRRAAEFLRAAQETLAAGAATDLLAADLTGAANALGEITGETVGEDLLDMIFSRFCIGK.

(6S)-5-formyl-5,6,7,8-tetrahydrofolate-binding residues include Arg21, Glu82, and Arg121. Residues 214–372 (GARVVLVGRP…LAKTIATTLL (159 aa)) enclose the TrmE-type G domain. Residue Asn224 participates in K(+) binding. GTP is bound by residues 224–229 (NVGKSS), 243–249 (TPIPGTT), 268–271 (DTAG), and 353–355 (SAR). Ser228 contributes to the Mg(2+) binding site. Residues Thr243, Ile245, and Thr248 each coordinate K(+). Thr249 contacts Mg(2+). Position 452 (Lys452) interacts with (6S)-5-formyl-5,6,7,8-tetrahydrofolate.

This sequence belongs to the TRAFAC class TrmE-Era-EngA-EngB-Septin-like GTPase superfamily. TrmE GTPase family. As to quaternary structure, homodimer. Heterotetramer of two MnmE and two MnmG subunits. The cofactor is K(+).

Its subcellular location is the cytoplasm. In terms of biological role, exhibits a very high intrinsic GTPase hydrolysis rate. Involved in the addition of a carboxymethylaminomethyl (cmnm) group at the wobble position (U34) of certain tRNAs, forming tRNA-cmnm(5)s(2)U34. In Chloroflexus aurantiacus (strain ATCC 29366 / DSM 635 / J-10-fl), this protein is tRNA modification GTPase MnmE.